Reading from the N-terminus, the 243-residue chain is Probable transcriptional regulatory protein Tbd_2215 (243 aa).

The protein belongs to the TACO1 family.

It is found in the cytoplasm. This Thiobacillus denitrificans (strain ATCC 25259 / T1) protein is Probable transcriptional regulatory protein Tbd_2215.